The primary structure comprises 156 residues: MPRRRLIGQRKILPDPKLGSERLAKFINILMKNGKKSLAETIVYSALEIIAKRSGKNYLEAFEAALDNVRPAIEVKSRRVGGSTYQVPVEVRSIRRDTLAMRWIVEAARKRSDKSMAIRLANELVDATEHKGAAVKKREEVHRMADANKAFAHYRW.

Belongs to the universal ribosomal protein uS7 family. In terms of assembly, part of the 30S ribosomal subunit. Contacts proteins S9 and S11.

Its function is as follows. One of the primary rRNA binding proteins, it binds directly to 16S rRNA where it nucleates assembly of the head domain of the 30S subunit. Is located at the subunit interface close to the decoding center, probably blocks exit of the E-site tRNA. The sequence is that of Small ribosomal subunit protein uS7 from Baumannia cicadellinicola subsp. Homalodisca coagulata.